We begin with the raw amino-acid sequence, 150 residues long: Large ribosomal subunit protein bL9 (150 aa).

Belongs to the bacterial ribosomal protein bL9 family.

Its function is as follows. Binds to the 23S rRNA. This Neisseria meningitidis serogroup B (strain ATCC BAA-335 / MC58) protein is Large ribosomal subunit protein bL9.